The chain runs to 503 residues: Betaine aldehyde dehydrogenase 2 (503 aa).

Betaine aldehyde is bound at residue 161 to 170 (WNYPLLMATW). An NAD(+)-binding site is contributed by 238–243 (GSYETG). Betaine aldehyde contacts are provided by residues Glu-260, 292–295 (QICS), and Cys-453. Catalysis depends on residues Glu-260 and Cys-294. 4-aminobutanal contacts are provided by residues 260–261 (EL) and Cys-294. Position 459 (Trp-459) interacts with 4-aminobutanal. Positions 501–503 (SKL) match the Microbody targeting signal motif.

Belongs to the aldehyde dehydrogenase family. Homodimer.

It is found in the peroxisome. Its subcellular location is the cytoplasm. The enzyme catalyses betaine aldehyde + NAD(+) + H2O = glycine betaine + NADH + 2 H(+). Its pathway is amine and polyamine biosynthesis; betaine biosynthesis via choline pathway; betaine from betaine aldehyde: step 1/1. Dehydrogenase that can use N-acetyl-c-aminobutyraldehyde (NAGABald), gamma-guanidinobutyraldehyde (GGBald), betaine aldehyde (Bet-ald), gamma-aminobutyraldehyde (GAB-ald), acetaldehyde, 4-aminobutylaldehyde (AB-ald), 3-aminopropionaldehyde (AP-ald), 4-N-trimethylaminobutyraldehyde (TMAB-ald) and 3-N-trimethylaminopropionaldehyde (TMAP-ald) as substrates. Catalyzes the oxidation of GAB-ald more efficiently than Bet-ald. Mediates the conversion of GAB-ald into gamma-aminobutyric acid (GABA), and prevents the formation of 2-acetyl-1-pyrroline (2AP) which gives fragrant rice its aromatic properties. In Oryza sativa subsp. indica (Rice), this protein is Betaine aldehyde dehydrogenase 2 (BADH2).